Reading from the N-terminus, the 51-residue chain is MNGGGVFTDILAASGRIFEVMVEGHWATVGYLFDSLGKGVSRINQNAYGNM.

Residue His-25 participates in a bacteriochlorophyll e binding.

It belongs to the BChl C/E-binding protein family.

It is found in the chlorosome. It localises to the chlorosome envelope. In terms of biological role, component of the photosynthetic apparatus. The light harvesting B740 complex binds bacteriochlorophyll e. This is Bacteriochlorophyll e-binding protein (csmA) from Chlorobium phaeovibrioides.